The following is a 254-amino-acid chain: Short-chain dehydrogenase srdF (254 aa).

Residues I18, S37, E67, N95, Y167, K171, V199, and T201 each contribute to the NADP(+) site. Y167 functions as the Proton donor in the catalytic mechanism. K171 acts as the Lowers pKa of active site Tyr in catalysis.

Belongs to the short-chain dehydrogenases/reductases (SDR) family.

Functionally, short-chain dehydrogenase; part of the gene cluster that mediates the biosynthesis of sordarial, a salicylic aldehyde structurally related to the phytotoxin pyriculol. The most interesting aspect of this pathway is formation of an aromatic product from the highly reducing polyketide synthase srdA. SrdA synthesizes a reduced polyketide chain from one molecule of acetyl-CoA and five molecules of malonyl-CoA. The polyketide chain is then reductively released as an aldehyde. The oxidoreductases srdC, srdD and srdE then oxidize one of the hydroxy groups to facilitate the intramolecular aldol condensation, followed by dehydration to yield a salicylic aldehyde. This aldehyde can undergo facile reduction by endogenous reductases to yield the alcohol 1-hydroxy-2-hydroxymethyl-3-pent-1,3-dienylbenzene. The flavin-dependent srdI counteract against the propensity of the aldehydes to be reduced under physiological conditions and is responsible for reoxidizing 1-hydroxy-2-hydroxymethyl-3-pent-1,3-dienylbenzene back to the salicylic aldehyde. This salicylic aldehyde is then selectively epoxidized by the cupin-domain-containing oxidoreductase srdB to yield the epoxide, which can be hydrolyzed stereoselectively by the hydrolase srdG to give the final product sordarial. This is Short-chain dehydrogenase srdF from Neurospora crassa (strain ATCC 24698 / 74-OR23-1A / CBS 708.71 / DSM 1257 / FGSC 987).